The sequence spans 1966 residues: Histone-lysine N-methyltransferase SETD1B (1966 aa).

Residues 1-12 (MENSHPPHHHHQ) are compositionally biased toward basic residues. The tract at residues 1-26 (MENSHPPHHHHQQPPPQPGPSGERRN) is disordered. The tract at residues 68–98 (VEDPRVVGIWTKNKELELSVPKFKIDEFYVG) is interaction with WDR82. Residues 93-181 (DEFYVGPVPP…NIIHVELDTK (89 aa)) enclose the RRM domain. Disordered stretches follow at residues 235–302 (GCGS…LFSQ), 357–660 (VGGT…PKPM), 675–719 (LAPT…PPPA), 963–1462 (KVKR…SGPL), 1501–1541 (PPLL…RPPA), 1555–1606 (QPQT…KLPF), and 1636–1668 (AKSR…PQPL). 3 stretches are compositionally biased toward polar residues: residues 243–259 (VTPN…TAYS), 265–274 (TPNSYGQGTP), and 282–300 (PFSQ…SYLF). Pro residues-rich tracts occupy residues 432–441 (PAPPPLPPAE) and 449–458 (GTPPGPPPPD). Residues 493 to 521 (EKPHDSLDSRIEMLLKEQRTKLLFLREPD) show a composition bias toward basic and acidic residues. Positions 531-543 (SPISSSSSQLSPL) are enriched in low complexity. The span at 592–603 (PRPPPEPGPPDP) shows a compositional bias: pro residues. Residues 637–646 (EDMEISDDEM) show a composition bias toward acidic residues. Positions 679–719 (LPLPPPPGFPPLPPPPPPPPPQPGFPMPPPLPPPPPPPPPA) are enriched in pro residues. Residues Ser986 and Ser994 each carry the phosphoserine modification. A compositionally biased stretch (basic and acidic residues) spans 995 to 1015 (ERERDRDMADTPCELAKRDPK). A Phosphoserine modification is found at Ser1031. Residues 1041 to 1064 (LSASSSSSASSSSGSSTTSPSSSA) are compositionally biased toward low complexity. 2 stretches are compositionally biased toward acidic residues: residues 1067 to 1087 (KEEE…EEEE) and 1104 to 1142 (KDDD…EEET). A compositionally biased stretch (low complexity) spans 1148–1174 (SKAEATSSSESSESSEFESSSESSPSS). Residues 1173-1204 (SSSEDEEEVVAREEEEEEEEEEMVAEESMASA) are a coiled coil. Acidic residues-rich tracts occupy residues 1175-1197 (SEDE…EMVA) and 1229-1238 (GMEEEVDIET). Residues Ser1265, Ser1283, and Ser1335 each carry the phosphoserine modification. Pro residues predominate over residues 1312–1340 (EPPMMLPLPLQPPLPPPRPPRPPSPPPEP). The span at 1383-1425 (PGGEPPLSGGSSGLSLSSPQVPGSPFSYPAPSPSLSSGGLPRT) shows a compositional bias: low complexity. The segment covering 1501–1514 (PPLLPAPLASCPPP) has biased composition (pro residues). The segment covering 1515-1524 (MKRKPGRPRR) has biased composition (basic residues). A compositionally biased stretch (pro residues) spans 1580-1600 (PAPPPPLPPQPPPPPPPPPVE). Phosphoserine occurs at positions 1659 and 1663. The short motif at 1745–1750 (GCARSE) is the WDR5 interaction motif (WIN) element. The disordered stretch occupies residues 1767–1800 (SRASTDEPPADTQGMSIPAQPHASTRAGSERRSE). The RxxxRR motif signature appears at 1798-1803 (RSEQRR). The region spanning 1827–1944 (KKLKFCKSHI…VNEEITYDYK (118 aa)) is the SET domain. S-adenosyl-L-methionine is bound at residue Tyr1943. In terms of domain architecture, Post-SET spans 1950–1966 (VKIPCLCGSENCRGTLN).

It belongs to the class V-like SAM-binding methyltransferase superfamily. Component of the SET1B/COMPASS complex composed of the catalytic subunit SETD1B, WDR5, WDR82, RBBP5, ASH2L/ASH2, CXXC1/CFP1, HCFC1, DPY30 homotrimer and BOD1. Forms a core complex with the evolutionary conserved subcomplex WRAD composed of WDR5, RBBP5, ASH2L/ASH2 and DPY30 subunits; WRAD differentially stimulates the methyltransferase activity. Interacts with HCFC1 and ASH2L/ASH2. Interacts (via N-terminal region) with WDR82. Interacts (via the RRM domain) with hyperphosphorylated C-terminal domain (CTD) of RNA polymerase II large subunit (POLR2A) only in the presence of WDR82. Binds specifically to CTD heptad repeats phosphorylated on 'Ser-5' of each heptad. Interacts with RBM15. Interacts (via WIN motif) with WDR5.

The protein localises to the nucleus. It is found in the nucleus speckle. It localises to the chromosome. Its subcellular location is the cytoplasm. The enzyme catalyses L-lysyl(4)-[histone H3] + S-adenosyl-L-methionine = N(6)-methyl-L-lysyl(4)-[histone H3] + S-adenosyl-L-homocysteine + H(+). It catalyses the reaction N(6)-methyl-L-lysyl(4)-[histone H3] + S-adenosyl-L-methionine = N(6),N(6)-dimethyl-L-lysyl(4)-[histone H3] + S-adenosyl-L-homocysteine + H(+). The catalysed reaction is N(6),N(6)-dimethyl-L-lysyl(4)-[histone H3] + S-adenosyl-L-methionine = N(6),N(6),N(6)-trimethyl-L-lysyl(4)-[histone H3] + S-adenosyl-L-homocysteine + H(+). In terms of biological role, histone methyltransferase that catalyzes methyl group transfer from S-adenosyl-L-methionine to the epsilon-amino group of 'Lys-4' of histone H3 (H3K4) via a non-processive mechanism. Part of chromatin remodeling machinery, forms H3K4me1, H3K4me2 and H3K4me3 methylation marks at active chromatin sites where transcription and DNA repair take place. Plays an essential role in regulating the transcriptional programming of multipotent hematopoietic progenitor cells and lymphoid lineage specification during hematopoiesis. The chain is Histone-lysine N-methyltransferase SETD1B (SETD1B) from Homo sapiens (Human).